A 359-amino-acid polypeptide reads, in one-letter code: 3-dehydroquinate synthase (359 aa).

NAD(+)-binding positions include 106–110, 130–131, lysine 143, and lysine 152; these read GVVGD and TS. Zn(2+) contacts are provided by glutamate 185, histidine 246, and histidine 263.

It belongs to the sugar phosphate cyclases superfamily. Dehydroquinate synthase family. It depends on Co(2+) as a cofactor. Zn(2+) is required as a cofactor. The cofactor is NAD(+).

The protein resides in the cytoplasm. The enzyme catalyses 7-phospho-2-dehydro-3-deoxy-D-arabino-heptonate = 3-dehydroquinate + phosphate. The protein operates within metabolic intermediate biosynthesis; chorismate biosynthesis; chorismate from D-erythrose 4-phosphate and phosphoenolpyruvate: step 2/7. In terms of biological role, catalyzes the conversion of 3-deoxy-D-arabino-heptulosonate 7-phosphate (DAHP) to dehydroquinate (DHQ). The polypeptide is 3-dehydroquinate synthase (Clostridium kluyveri (strain ATCC 8527 / DSM 555 / NBRC 12016 / NCIMB 10680 / K1)).